The chain runs to 315 residues: Porphobilinogen deaminase (315 aa).

Cysteine 234 carries the post-translational modification S-(dipyrrolylmethanemethyl)cysteine.

The protein belongs to the HMBS family. As to quaternary structure, monomer. Requires dipyrromethane as cofactor.

The enzyme catalyses 4 porphobilinogen + H2O = hydroxymethylbilane + 4 NH4(+). It participates in porphyrin-containing compound metabolism; protoporphyrin-IX biosynthesis; coproporphyrinogen-III from 5-aminolevulinate: step 2/4. Its function is as follows. Tetrapolymerization of the monopyrrole PBG into the hydroxymethylbilane pre-uroporphyrinogen in several discrete steps. This is Porphobilinogen deaminase (hemC) from Mycobacterium leprae (strain TN).